A 201-amino-acid polypeptide reads, in one-letter code: 3-isopropylmalate dehydratase small subunit (201 aa).

The protein belongs to the LeuD family. LeuD type 1 subfamily. As to quaternary structure, heterodimer of LeuC and LeuD.

The enzyme catalyses (2R,3S)-3-isopropylmalate = (2S)-2-isopropylmalate. The protein operates within amino-acid biosynthesis; L-leucine biosynthesis; L-leucine from 3-methyl-2-oxobutanoate: step 2/4. In terms of biological role, catalyzes the isomerization between 2-isopropylmalate and 3-isopropylmalate, via the formation of 2-isopropylmaleate. The sequence is that of 3-isopropylmalate dehydratase small subunit from Escherichia coli O45:K1 (strain S88 / ExPEC).